The following is a 210-amino-acid chain: MGTWILFACLLGAAFAMPLPPHPGSPGYINLSYEKSHSQAINTDRTALVLTPLKWYQSMIRQPYPSYGYEPMGGWLHHQIIPVLSQQHPPSHTLQPHHHLPVVPAQQPVAPQQPMMPVPGHHSMTPTQHHQPNIPPSAQQPFQQPFQPQAIPPQSHQPMQPQSPLHPMQPLAPQPPLPPLFSMQPLSPILPELPLEAWPATDKTKREEVD.

Residues 1-16 form the signal peptide; it reads MGTWILFACLLGAAFA. Ser32 is subject to Phosphoserine. Composition is skewed to low complexity over residues 109 to 119 and 136 to 169; these read VAPQQPMMPVP and PSAQ…HPMQ. The interval 109-187 is disordered; the sequence is VAPQQPMMPV…PPLFSMQPLS (79 aa). Positions 170–179 are enriched in pro residues; it reads PLAPQPPLPP.

It belongs to the amelogenin family. Interacts with KRT5. Post-translationally, several forms are produced by C-terminal processing. Phosphorylated by FAM20C in vitro.

Its subcellular location is the secreted. It localises to the extracellular space. It is found in the extracellular matrix. Its function is as follows. Plays a role in the biomineralization of teeth. Seems to regulate the formation of crystallites during the secretory stage of tooth enamel development. Thought to play a major role in the structural organization and mineralization of developing enamel. This is Amelogenin, X isoform (Amelx) from Mus musculus (Mouse).